Reading from the N-terminus, the 145-residue chain is UPF0299 membrane protein plu1549 (145 aa).

Helical transmembrane passes span 6–26, 34–54, 65–85, and 95–115; these read VLIVGWQYLRAFVLIYLCLLT, LPIIIPGSIIGMLILFVLLAF, GCSLLLKNMTLLFLPIGVGVM, and IIPIVFSCLISTAIVMIIVAY.

It belongs to the UPF0299 family.

The protein localises to the cell inner membrane. This Photorhabdus laumondii subsp. laumondii (strain DSM 15139 / CIP 105565 / TT01) (Photorhabdus luminescens subsp. laumondii) protein is UPF0299 membrane protein plu1549.